A 329-amino-acid chain; its full sequence is Ketol-acid reductoisomerase (NADP(+)) (329 aa).

Positions 2-181 (VQKYYESDAD…GATRAVVFET (180 aa)) constitute a KARI N-terminal Rossmann domain. Residues 25 to 28 (YGSQ), arginine 48, serine 52, and 82 to 85 (DENQ) each bind NADP(+). Histidine 107 is a catalytic residue. An NADP(+)-binding site is contributed by glycine 133. Positions 182–327 (TFAEETETDL…AEIRGFMPQF (146 aa)) constitute a KARI C-terminal knotted domain. Mg(2+) contacts are provided by aspartate 190, glutamate 194, glutamate 226, and glutamate 230. Serine 251 serves as a coordination point for substrate.

Belongs to the ketol-acid reductoisomerase family. Mg(2+) serves as cofactor.

It carries out the reaction (2R)-2,3-dihydroxy-3-methylbutanoate + NADP(+) = (2S)-2-acetolactate + NADPH + H(+). The catalysed reaction is (2R,3R)-2,3-dihydroxy-3-methylpentanoate + NADP(+) = (S)-2-ethyl-2-hydroxy-3-oxobutanoate + NADPH + H(+). It participates in amino-acid biosynthesis; L-isoleucine biosynthesis; L-isoleucine from 2-oxobutanoate: step 2/4. It functions in the pathway amino-acid biosynthesis; L-valine biosynthesis; L-valine from pyruvate: step 2/4. In terms of biological role, involved in the biosynthesis of branched-chain amino acids (BCAA). Catalyzes an alkyl-migration followed by a ketol-acid reduction of (S)-2-acetolactate (S2AL) to yield (R)-2,3-dihydroxy-isovalerate. In the isomerase reaction, S2AL is rearranged via a Mg-dependent methyl migration to produce 3-hydroxy-3-methyl-2-ketobutyrate (HMKB). In the reductase reaction, this 2-ketoacid undergoes a metal-dependent reduction by NADPH to yield (R)-2,3-dihydroxy-isovalerate. In Methanoculleus marisnigri (strain ATCC 35101 / DSM 1498 / JR1), this protein is Ketol-acid reductoisomerase (NADP(+)).